We begin with the raw amino-acid sequence, 732 residues long: Catalase-peroxidase (732 aa).

Residues 1–26 (MADNKKSPETGGITMQIPGKGRTNRD) form a disordered region. Positions 96-219 (WHSAGTYRTF…LAAVQMGLIY (124 aa)) form a cross-link, tryptophyl-tyrosyl-methioninium (Trp-Tyr) (with M-245). H97 acts as the Proton acceptor in catalysis. The tryptophyl-tyrosyl-methioninium (Tyr-Met) (with W-96) cross-link spans 219-245 (YVNPEGPDGNPDPVAAARDIREVFARM). H260 provides a ligand contact to heme b. Residues 344-365 (KPKGEAGAGTVPDPHDPKKRHA) are disordered.

It belongs to the peroxidase family. Peroxidase/catalase subfamily. In terms of assembly, homodimer or homotetramer. Heme b is required as a cofactor. Formation of the three residue Trp-Tyr-Met cross-link is important for the catalase, but not the peroxidase activity of the enzyme.

It catalyses the reaction H2O2 + AH2 = A + 2 H2O. The enzyme catalyses 2 H2O2 = O2 + 2 H2O. In terms of biological role, bifunctional enzyme with both catalase and broad-spectrum peroxidase activity. In Methanospirillum hungatei JF-1 (strain ATCC 27890 / DSM 864 / NBRC 100397 / JF-1), this protein is Catalase-peroxidase.